Reading from the N-terminus, the 364-residue chain is Peroxidase (364 aa).

An N-terminal signal peptide occupies residues 1–20 (MKLSLFSTFAAVIIGALALP). A Pyrrolidone carboxylic acid modification is found at Gln21. Disulfide bonds link Cys32/Cys44, Cys43/Cys313, Cys63/Cys149, and Cys277/Cys342. His76 serves as the catalytic Proton acceptor. Ca(2+)-binding residues include Asp77, Gly95, Asp97, and Ser99. Asn163 is a glycosylation site (N-linked (GlcNAc...) (high mannose) asparagine). His204 is a heme b binding site. Residues Ser205, Asp222, Thr224, Val227, and Asp229 each contribute to the Ca(2+) site.

It belongs to the peroxidase family. Ligninase subfamily. It depends on Ca(2+) as a cofactor. Heme b is required as a cofactor.

The protein resides in the secreted. It carries out the reaction 2 a phenolic donor + H2O2 = 2 a phenolic radical donor + 2 H2O. The polypeptide is Peroxidase (Arthromyces ramosus).